The primary structure comprises 195 residues: MKIIGLTGSIAMGKSTVADFFRQAGISVFSADEAVYKLYKSEPTLSLIEYKFPGVFENGKVNRQKLSEILINDNEKLQTLEKIIHPLVQEKEKKFIDTARQQGEKLVVLDIPLLLETKGEKRVDSVVVVSAPLAIQKERAMIRQNMSEKKFAFINGRQMSDEKKRARADFIIDTGKDLENTREQVLFVIKSLLKN.

The 193-residue stretch at 3–195 (IIGLTGSIAM…LFVIKSLLKN (193 aa)) folds into the DPCK domain. 11-16 (AMGKST) is a binding site for ATP.

It belongs to the CoaE family.

The protein localises to the cytoplasm. The catalysed reaction is 3'-dephospho-CoA + ATP = ADP + CoA + H(+). It functions in the pathway cofactor biosynthesis; coenzyme A biosynthesis; CoA from (R)-pantothenate: step 5/5. Functionally, catalyzes the phosphorylation of the 3'-hydroxyl group of dephosphocoenzyme A to form coenzyme A. The chain is Dephospho-CoA kinase from Bartonella henselae (strain ATCC 49882 / DSM 28221 / CCUG 30454 / Houston 1) (Rochalimaea henselae).